A 64-amino-acid chain; its full sequence is Insect toxin OsI1 (64 aa).

The region spanning 1–61 is the LCN-type CS-alpha/beta domain; sequence DGYPKQKDGC…MWKYETNTCG (61 aa). 4 disulfides stabilise this stretch: Cys10–Cys60, Cys14–Cys35, Cys21–Cys42, and Cys25–Cys44. Gly61 is subject to Glycine amide.

Belongs to the long (4 C-C) scorpion toxin superfamily. Sodium channel inhibitor family. Beta subfamily. As to expression, expressed by the venom gland.

It localises to the secreted. Functionally, depressant insect beta-toxins cause a transient contraction paralysis followed by a slow flaccid paralysis. They bind voltage-independently at site-4 of sodium channels (Nav) and shift the voltage of activation toward more negative potentials thereby affecting sodium channel activation and promoting spontaneous and repetitive firing. This toxin is active only on insects. This Orthochirus scrobiculosus (Central Asian scorpion) protein is Insect toxin OsI1.